Here is a 369-residue protein sequence, read N- to C-terminus: Aminomethyltransferase (369 aa).

It belongs to the GcvT family. As to quaternary structure, the glycine cleavage system is composed of four proteins: P, T, L and H.

It carries out the reaction N(6)-[(R)-S(8)-aminomethyldihydrolipoyl]-L-lysyl-[protein] + (6S)-5,6,7,8-tetrahydrofolate = N(6)-[(R)-dihydrolipoyl]-L-lysyl-[protein] + (6R)-5,10-methylene-5,6,7,8-tetrahydrofolate + NH4(+). Its function is as follows. The glycine cleavage system catalyzes the degradation of glycine. This is Aminomethyltransferase from Xanthomonas oryzae pv. oryzae (strain PXO99A).